The chain runs to 317 residues: Beta-ketoacyl-[acyl-carrier-protein] synthase III (317 aa).

Catalysis depends on residues Cys-112 and His-244. Residues 245 to 249 (QANLR) are ACP-binding. Asn-274 is an active-site residue.

This sequence belongs to the thiolase-like superfamily. FabH family. Homodimer.

It is found in the cytoplasm. The enzyme catalyses malonyl-[ACP] + acetyl-CoA + H(+) = 3-oxobutanoyl-[ACP] + CO2 + CoA. It participates in lipid metabolism; fatty acid biosynthesis. In terms of biological role, catalyzes the condensation reaction of fatty acid synthesis by the addition to an acyl acceptor of two carbons from malonyl-ACP. Catalyzes the first condensation reaction which initiates fatty acid synthesis and may therefore play a role in governing the total rate of fatty acid production. Possesses both acetoacetyl-ACP synthase and acetyl transacylase activities. Its substrate specificity determines the biosynthesis of branched-chain and/or straight-chain of fatty acids. In Salmonella paratyphi A (strain ATCC 9150 / SARB42), this protein is Beta-ketoacyl-[acyl-carrier-protein] synthase III.